The chain runs to 352 residues: C5a anaphylatoxin chemotactic receptor 1 (352 aa).

At 1–38 (MASMNFSPPEYPDYGTATLDPNIFVDESLNTPKLSVPD) the chain is on the extracellular side. Tyr11 and Tyr14 each carry sulfotyrosine. Residues 39–65 (MIALVIFVMVFLVGVPGNFLVVWVTGF) form a helical membrane-spanning segment. The Cytoplasmic segment spans residues 66–70 (EVRRT). Residues 71–94 (INAIWFLNLAVADLLSCLALPILF) form a helical membrane-spanning segment. Residues 95–111 (SSIVQQGYWPFGNAACR) are Extracellular-facing. Cys110 and Cys189 form a disulfide bridge. The helical transmembrane segment at 112 to 133 (ILPSLILLNMYASILLLTTISA) threads the bilayer. The Cytoplasmic segment spans residues 134 to 154 (DRFVLVFNPIWCQNYRGPQLA). Residues 155–175 (WAACSVAWAVALLLTVPSFIF) form a helical membrane-spanning segment. The Extracellular portion of the chain corresponds to 176 to 202 (RGVHTEYFPFWMTCGVDYSGVGVLVER). A helical membrane pass occupies residues 203–228 (GVAILRLLMGFLGPLVILSICYTFLL). Residues 229–244 (IRTWSRKATRSTKTLK) lie on the Cytoplasmic side of the membrane. The chain crosses the membrane as a helical span at residues 245 to 267 (VVVAVVVSFFVLWLPYQVTGMMM). Over 268 to 284 (ALFYKHSESFRRVSRLD) the chain is Extracellular. The helical transmembrane segment at 285-305 (SLCVAVAYINCCINPIIYVLA) threads the bilayer. The Cytoplasmic segment spans residues 306-352 (AQGFHSRFLKSLPARLRQVLAEESVGRDSKSITLSTVDTPAQKSQGV). Phosphoserine occurs at positions 316, 329, 334, 336, and 340.

It belongs to the G-protein coupled receptor 1 family. In terms of assembly, homodimer. May also form higher-order oligomers. Interacts (when phosphorylated) with ARRB1 and ARRB2; the interaction is associated with internalization of C5aR. In terms of processing, sulfation plays a critical role in the association of C5aR with C5a, but no significant role in the ability of the receptor to transduce a signal and mobilize calcium in response to a small peptide agonist. Post-translationally, phosphorylated on serine residues in response to C5a binding, resulting in internalization of the receptor and short-term desensitization to C5a.

It localises to the cell membrane. It is found in the cytoplasmic vesicle. Its function is as follows. Receptor for the chemotactic and inflammatory peptide anaphylatoxin C5a. The ligand interacts with at least two sites on the receptor: a high-affinity site on the extracellular N-terminus, and a second site in the transmembrane region which activates downstream signaling events. Receptor activation stimulates chemotaxis, granule enzyme release, intracellular calcium release and superoxide anion production. The protein is C5a anaphylatoxin chemotactic receptor 1 (C5AR1) of Canis lupus familiaris (Dog).